The primary structure comprises 117 residues: Protein Turandot F (117 aa).

An N-terminal signal peptide occupies residues 1–22 (MKTVILFSFLLVLLGYLGAGHA).

The protein belongs to the Turandot family.

It localises to the secreted. Functionally, a humoral factor that may play a role in stress tolerance. The chain is Protein Turandot F from Drosophila sechellia (Fruit fly).